Here is a 607-residue protein sequence, read N- to C-terminus: UvrABC system protein C (607 aa).

The region spanning 29 to 106 (DKPGVYLMKD…IKKHNPKYNI (78 aa)) is the GIY-YIG domain. A UVR domain is found at 211-246 (GAILKALEKKMKEASENLEFERAKEYRDLMEDLKKV).

It belongs to the UvrC family. As to quaternary structure, interacts with UvrB in an incision complex.

The protein resides in the cytoplasm. In terms of biological role, the UvrABC repair system catalyzes the recognition and processing of DNA lesions. UvrC both incises the 5' and 3' sides of the lesion. The N-terminal half is responsible for the 3' incision and the C-terminal half is responsible for the 5' incision. The polypeptide is UvrABC system protein C (Desulfitobacterium hafniense (strain Y51)).